A 535-amino-acid polypeptide reads, in one-letter code: Large neutral amino acids transporter small subunit 2 (535 aa).

Residues 1–10 (MEKGARHRHN) are compositionally biased toward basic residues. The interval 1–30 (MEKGARHRHNTDKNHAGGSESEDFPEASSG) is disordered. The Cytoplasmic portion of the chain corresponds to 1–44 (MEKGARHRHNTDKNHAGGSESEDFPEASSGGGGVALKKEIGLVS). 3 positions are modified to phosphoserine: Ser19, Ser28, and Ser29. A helical membrane pass occupies residues 45 to 65 (ACGIIVGNIIGSGIFVSPKGV). Ile53 contributes to the L-leucine binding site. At 66–73 (LENAGSVG) the chain is on the extracellular side. Residues 74–95 (LAVIVWIVTGLITAVGALCYAE) traverse the membrane as a helical segment. The Cytoplasmic segment spans residues 96–116 (LGVTIPKSGGDYSYVKDIFGG). A helical transmembrane segment spans residues 117-149 (LAGFLRLWIAVLVIYPTNQAVIALTFSNYVLQP). Position 134 (Asn134) interacts with L-tryptophan. Topologically, residues 150-157 (LFPTCFPP) are extracellular. A helical transmembrane segment spans residues 158–178 (DSGLRLLAAICLLLLTWVNCS). The Cytoplasmic portion of the chain corresponds to 179–181 (SVR). A helical membrane pass occupies residues 182–210 (WATRVQDIFTAGKLLALALIIIMGVVQIC). Over 211–230 (KGEYFWLEPKNAFDNFQEPD) the chain is Extracellular. The helical transmembrane segment at 231 to 252 (IGLIALAFLQGSFAYGGWNFLN) threads the bilayer. Gly246 is an L-leucine binding site. Residues 253–265 (YVTEELVDPYKNL) are Cytoplasmic-facing. Residues 266–287 (PRAIFISIPLVTFVYVFANVAY) traverse the membrane as a helical segment. Topologically, residues 288–312 (ITAMSPQELLASNAVAVTFGEKLLG) are extracellular. A helical membrane pass occupies residues 313-338 (VMAWIMPISVALSTFGGVNGSLFTSS). Residues 339-364 (RLFFAGAREGHLPSVLAMIHVKRCTP) lie on the Cytoplasmic side of the membrane. The helical transmembrane segment at 365–382 (IPALLFTCLSTLLMLVTS) threads the bilayer. Topologically, residues 383–386 (DMYT) are extracellular. A helical membrane pass occupies residues 387-408 (LINYVGFINYLFYGVTVAGQIV). Asn395 contacts L-tryptophan. Topologically, residues 409–423 (LRWKKPDIPRPIKIN) are cytoplasmic. The next 2 helical transmembrane spans lie at 424–446 (LLFP…WSEP) and 447–466 (VVCG…YFLG). The Cytoplasmic portion of the chain corresponds to 467 to 535 (VYWQHKPKCF…DKDSLEQSQP (69 aa)). Positions 500-535 (GGSGTEGTREDMEEQQQPICQPSPGKDKDSLEQSQP) are disordered. A compositionally biased stretch (basic and acidic residues) spans 524–535 (GKDKDSLEQSQP). Ser529 bears the Phosphoserine mark.

It belongs to the amino acid-polyamine-organocation (APC) superfamily. L-type amino acid transporter (LAT) (TC 2.A.3.8) family. As to quaternary structure, disulfide-linked heterodimer composed of the catalytic light chain subunit SLC7A8 and the heavy chain subunit SLC3A2. SLC3A2 acts as a chaperone for correct plasma membrane trafficking and stabilization of SLC7A8 and modulates the substrate affinity and specificity of SLC7A8. ICAM-1 associates with the heterodimer SLC3A2/SLC7A8; facilitates leucine uptake. As to expression, mainly expressed in kidney and small intestine.

Its subcellular location is the cell membrane. It is found in the basolateral cell membrane. It carries out the reaction L-histidine(in) + L-phenylalanine(out) = L-histidine(out) + L-phenylalanine(in). The catalysed reaction is L-tryptophan(in) + L-phenylalanine(out) = L-tryptophan(out) + L-phenylalanine(in). It catalyses the reaction L-isoleucine(in) + L-phenylalanine(out) = L-isoleucine(out) + L-phenylalanine(in). The enzyme catalyses L-valine(in) + L-phenylalanine(out) = L-valine(out) + L-phenylalanine(in). It carries out the reaction L-leucine(in) + L-phenylalanine(out) = L-leucine(out) + L-phenylalanine(in). The catalysed reaction is L-glutamine(in) + L-phenylalanine(out) = L-glutamine(out) + L-phenylalanine(in). It catalyses the reaction L-cysteine(in) + L-phenylalanine(out) = L-cysteine(out) + L-phenylalanine(in). The enzyme catalyses L-phenylalanine(out) + L-methionine(in) = L-phenylalanine(in) + L-methionine(out). It carries out the reaction L-leucine(out) + L-methionine(in) = L-leucine(in) + L-methionine(out). The catalysed reaction is L-cysteine(out) + L-methionine(in) = L-cysteine(in) + L-methionine(out). It catalyses the reaction S-methylmercury-L-cysteine(out) + L-methionine(in) = S-methylmercury-L-cysteine(in) + L-methionine(out). The enzyme catalyses S-methylmercury-L-cysteine(in) + L-leucine(out) = S-methylmercury-L-cysteine(out) + L-leucine(in). It carries out the reaction S-methylmercury-L-cysteine(in) + L-phenylalanine(out) = S-methylmercury-L-cysteine(out) + L-phenylalanine(in). The catalysed reaction is L-phenylalanine(out) + L-serine(in) = L-phenylalanine(in) + L-serine(out). It catalyses the reaction L-phenylalanine(out) + glycine(in) = L-phenylalanine(in) + glycine(out). The enzyme catalyses L-phenylalanine(out) + L-alanine(in) = L-phenylalanine(in) + L-alanine(out). It carries out the reaction 3,3',5-triiodo-L-thyronine(out) = 3,3',5-triiodo-L-thyronine(in). The catalysed reaction is 3,3'-diiodo-L-thyronine(out) = 3,3'-diiodo-L-thyronine(in). It catalyses the reaction L-dopa(out) + L-phenylalanine(in) = L-dopa(in) + L-phenylalanine(out). With respect to regulation, the transporter activity is inhibited by 2-aminobicyclo-(2,2,1)heptane-2-carboxylic acid (BCH) (a specific inhibitor of system L transport). In terms of biological role, associates with SLC3A2 to form a functional heterodimeric complex that translocates small and large neutral amino acids with broad specificity and a stoichiometry of 1:1. Functions as amino acid antiporter mediating the influx of extracellular essential amino acids mainly in exchange with the efflux of highly concentrated intracellular amino acids. Has relatively symmetrical selectivities but strongly asymmetrical substrate affinities at both the intracellular and extracellular sides of the transporter. This asymmetry allows SLC7A8 to regulate intracellular amino acid pools (mM concentrations) by exchange with external amino acids (uM concentration range), equilibrating the relative concentrations of different amino acids across the plasma membrane instead of mediating their net uptake. May play an essential role in the reabsorption of neutral amino acids from the epithelial cells to the bloodstream in the kidney. Involved in the uptake of methylmercury (MeHg) when administered as the L-cysteine or D,L-homocysteine complexes, and hence plays a role in metal ion homeostasis and toxicity. Involved in the cellular activity of small molecular weight nitrosothiols, via the stereoselective transport of L-nitrosocysteine (L-CNSO) across the transmembrane. Imports the thyroid hormone diiodothyronine (T2) and to a smaller extent triiodothyronine (T3) but not rT 3 or thyroxine (T4). Mediates the uptake of L-DOPA. May participate in auditory function. In Oryctolagus cuniculus (Rabbit), this protein is Large neutral amino acids transporter small subunit 2.